We begin with the raw amino-acid sequence, 509 residues long: Erythropoietin receptor (509 aa).

A signal peptide spans 1 to 24; sequence MYHFGATLWPGVGSLCLLLAGATW. Over 25-251 the chain is Extracellular; the sequence is APSPNSPDAK…SLLTASDLDP (227 aa). Intrachain disulfides connect C52/C62 and C91/C107. In terms of domain architecture, Fibronectin type-III spans 148–248; the sequence is PPAGLLARRA…EPASLLTASD (101 aa). N-linked (GlcNAc...) asparagine glycosylation occurs at N184. Positions 234-238 match the WSXWS motif motif; sequence WSAWS. The chain crosses the membrane as a helical span at residues 252–274; the sequence is LILTLSLILVLILLLLAVLALLS. Over 275–509 the chain is Cytoplasmic; it reads HRRTLKQKIW…PSPPNYVTCS (235 aa). Residue K282 forms a Glycyl lysine isopeptide (Lys-Gly) (interchain with G-Cter in ubiquitin) linkage. The Box 1 motif signature appears at 283–291; it reads IWPGIPSPE. A phosphotyrosine; by JAK2 mark is found at Y369 and Y427. Residues 453–458 carry the ITIM motif motif; the sequence is LKYLYL. K454 participates in a covalent cross-link: Glycyl lysine isopeptide (Lys-Gly) (interchain with G-Cter in ubiquitin). A phosphotyrosine; by JAK2 mark is found at Y455, Y457, Y469, Y486, Y490, and Y505. Residues 467-509 are disordered; it reads TDYSSGGSQETQGGSSSGPYSNPYENSLVPAPEPSPPNYVTCS. Positions 470-493 are enriched in low complexity; sequence SSGGSQETQGGSSSGPYSNPYENS.

Belongs to the type I cytokine receptor family. Type 1 subfamily. Forms homodimers on EPO stimulation. The tyrosine-phosphorylated form interacts with several SH2 domain-containing proteins including LYN, the adapter protein SH2B2, PTPN6, PTPN11, JAK2, PI3 kinases, STAT5A/B, SOCS3, CRKL. Interacts with INPP5D/SHIP1. SH2B2 binding inhibits the JAK-STAT signaling. Interacts with RHEX; this interaction occurs in a erythropoietin (EPO)-dependent manner. Interacts with ATXN2L. In terms of processing, on EPO stimulation, phosphorylated on C-terminal tyrosine residues by JAK2. The phosphotyrosine motifs are also recruitment sites for several SH2-containing proteins and adapter proteins which mediate cell proliferation. Phosphorylation on Tyr-455 is required for PTPN6 interaction, Tyr-427 for PTPN11. Tyr-427 is also required for SOCS3 binding, but Tyr-455/Tyr-457 motif is the preferred binding site. Ubiquitinated by the ECS(SOCS2) complex following ligand-binding and phosphorylation by JAK2, leading to its degradation by the proteasome. Regulation by the ECS(SOCS2) complex acts as a negative feedback loop of erythropoietin-mediated signaling pathway. Ubiquitination at Lys-282 mediates receptor internalization, whereas ubiquitination at Lys-454 promotes trafficking of activated receptors to the lysosomes for degradation. Ubiquitinated by NOSIP; appears to be either multi-monoubiquitinated or polyubiquitinated. Ubiquitination mediates proliferation and survival of EPO-dependent cells.

The protein localises to the cell membrane. In terms of biological role, receptor for erythropoietin, which mediates erythropoietin-induced erythroblast proliferation and differentiation. Upon EPO stimulation, EPOR dimerizes triggering the JAK2/STAT5 signaling cascade. In some cell types, can also activate STAT1 and STAT3. May also activate the LYN tyrosine kinase. Its function is as follows. Isoform EPOR-T acts as a dominant-negative receptor of EPOR-mediated signaling. In Sus scrofa (Pig), this protein is Erythropoietin receptor (EPOR).